The following is an 899-amino-acid chain: Tuberous sclerosis 1 protein homolog (899 aa).

Coiled-coil stretches lie at residues 540 to 706 and 737 to 847; these read LSST…CVNI and SDEQ…ELKN. Positions 874–899 are disordered; the sequence is NDSLHPKVGPPRRQSTDTSRSTFRQY. Residues 889-899 are compositionally biased toward polar residues; sequence TDTSRSTFRQY.

In terms of assembly, interacts with tsc2.

It localises to the cytoplasm. Its function is as follows. Together with tsc2, required for uptake of various amino acids from the environment and for proper conjugation. Involved in induction of gene expression of permeases and genes required for meiosis upon nitrogen starvation. May act as a GTPase-activating protein (GAP) for the small GTPase rhb1. The chain is Tuberous sclerosis 1 protein homolog (tsc1) from Schizosaccharomyces pombe (strain 972 / ATCC 24843) (Fission yeast).